An 87-amino-acid polypeptide reads, in one-letter code: Large ribosomal subunit protein bL31B (87 aa).

It belongs to the bacterial ribosomal protein bL31 family. Type B subfamily. Part of the 50S ribosomal subunit.

This is Large ribosomal subunit protein bL31B from Paraburkholderia phymatum (strain DSM 17167 / CIP 108236 / LMG 21445 / STM815) (Burkholderia phymatum).